We begin with the raw amino-acid sequence, 512 residues long: PTS system mannitol-specific EIICB component (512 aa).

The Cytoplasmic segment spans residues 1–28 (MSQTEEKKGIGRRVQAFGSFLSSMIMPN). A PTS EIIC type-2 domain is found at 17–349 (FGSFLSSMIM…MKFTKEPKQD (333 aa)). Residues 29–50 (IGAFIAWGFIAAIFIDNGWFPN) traverse the membrane as a helical segment. Residues 51-54 (KDLA) lie on the Extracellular side of the membrane. The chain crosses the membrane as a helical span at residues 55-75 (TLAGPMITYLIPLLIAFSGGR). At 76 to 139 (LIYDLRGGII…QGFEMLFNNF (64 aa)) the chain is on the cytoplasmic side. A helical membrane pass occupies residues 140-161 (SAGILGFIMTIAGFKILAPLMK). The Extracellular segment spans residues 162–170 (FIMHILSVA). Residues 171–191 (VEALVHAHLLPLVSILVEPAK) traverse the membrane as a helical segment. Residues 192–278 (IVFLNNAINH…VLMRPLLFIA (87 aa)) lie on the Cytoplasmic side of the membrane. The helical transmembrane segment at 279–298 (VILGGMTGVATYQATGFGFK) threads the bilayer. The Extracellular segment spans residues 299–318 (SPASPGSFIVYCLNAPRGEF). Residues 319–340 (LHMLLGVFLATLVSFVVAALIM) form a helical membrane-spanning segment. Residues 341–512 (KFTKEPKQDL…LNNLKKDDQA (172 aa)) lie on the Cytoplasmic side of the membrane. Residues 365-376 (SSVASKLVSSDK) are compositionally biased toward low complexity. Residues 365–401 (SSVASKLVSSDKNVNTEENASGNVSETSSLDDDPEAL) form a disordered region. A compositionally biased stretch (polar residues) spans 380-392 (TEENASGNVSETS). The region spanning 419 to 512 (NHVIFACDAG…LNNLKKDDQA (94 aa)) is the PTS EIIB type-2 domain. Catalysis depends on cysteine 425, which acts as the Phosphocysteine intermediate; for EIIB activity. Cysteine 425 carries the phosphocysteine; by EIIA modification.

Homodimer.

The protein resides in the cell membrane. It carries out the reaction D-mannitol(out) + N(pros)-phospho-L-histidyl-[protein] = D-mannitol 1-phosphate(in) + L-histidyl-[protein]. Functionally, the phosphoenolpyruvate-dependent sugar phosphotransferase system (sugar PTS), a major carbohydrate active transport system, catalyzes the phosphorylation of incoming sugar substrates concomitantly with their translocation across the cell membrane. The enzyme II CmtAB PTS system is involved in D-mannitol transport. The polypeptide is PTS system mannitol-specific EIICB component (mtlA) (Staphylococcus aureus (strain MRSA252)).